The chain runs to 166 residues: Putative universal stress protein SE_1385 (166 aa).

Belongs to the universal stress protein A family.

Its subcellular location is the cytoplasm. This Staphylococcus epidermidis (strain ATCC 12228 / FDA PCI 1200) protein is Putative universal stress protein SE_1385.